The following is a 246-amino-acid chain: Azurocidin (246 aa).

Positions 1-19 (MPALRFLALLASLLATSRV) are cleaved as a signal peptide. A propeptide spanning residues 20–26 (GLATLAD) is cleaved from the precursor. Residues 27 to 242 (IVGGRRAQPQ…FRNWIDSVLN (216 aa)) enclose the Peptidase S1 domain. Cysteine 52 and cysteine 68 are disulfide-bonded. Residues asparagine 139 and asparagine 170 are each glycosylated (N-linked (GlcNAc...) asparagine). 2 disulfides stabilise this stretch: cysteine 148-cysteine 205 and cysteine 178-cysteine 184. A propeptide spanning residues 245–246 (PA) is cleaved from the precursor.

This sequence belongs to the peptidase S1 family. Elastase subfamily.

The protein resides in the cytoplasmic granule membrane. Functionally, this is a neutrophil granule-derived antibacterial and monocyte- and fibroblast-specific chemotactic glycoprotein. Binds heparin. In Sus scrofa (Pig), this protein is Azurocidin.